Here is a 478-residue protein sequence, read N- to C-terminus: Glutamyl-tRNA reductase (478 aa).

Residues 49–52 (TCNR), Ser109, 114–116 (EQQ), and Gln120 contribute to the substrate site. Catalysis depends on Cys50, which acts as the Nucleophile. 191–196 (GAGSMG) is a binding site for NADP(+).

Belongs to the glutamyl-tRNA reductase family. In terms of assembly, homodimer.

The catalysed reaction is (S)-4-amino-5-oxopentanoate + tRNA(Glu) + NADP(+) = L-glutamyl-tRNA(Glu) + NADPH + H(+). It functions in the pathway porphyrin-containing compound metabolism; protoporphyrin-IX biosynthesis; 5-aminolevulinate from L-glutamyl-tRNA(Glu): step 1/2. In terms of biological role, catalyzes the NADPH-dependent reduction of glutamyl-tRNA(Glu) to glutamate 1-semialdehyde (GSA). The polypeptide is Glutamyl-tRNA reductase (Rhodococcus opacus (strain B4)).